A 414-amino-acid polypeptide reads, in one-letter code: uncharacterized protein (414 aa).

The protein belongs to the MG032/MG096/MG288 family.

This is an uncharacterized protein from Mycoplasma genitalium (strain ATCC 33530 / DSM 19775 / NCTC 10195 / G37) (Mycoplasmoides genitalium).